Reading from the N-terminus, the 288-residue chain is Shikimate dehydrogenase (NADP(+)) (288 aa).

Shikimate is bound by residues 21–23 (SLS) and Thr-68. The active-site Proton acceptor is the Lys-72. Glu-84 is an NADP(+) binding site. Positions 93 and 108 each coordinate shikimate. Residues 132–136 (GNGGA) and Leu-230 each bind NADP(+). Residue Tyr-232 participates in shikimate binding. Gly-253 is a binding site for NADP(+).

The protein belongs to the shikimate dehydrogenase family. Homodimer.

It catalyses the reaction shikimate + NADP(+) = 3-dehydroshikimate + NADPH + H(+). It participates in metabolic intermediate biosynthesis; chorismate biosynthesis; chorismate from D-erythrose 4-phosphate and phosphoenolpyruvate: step 4/7. Its function is as follows. Involved in the biosynthesis of the chorismate, which leads to the biosynthesis of aromatic amino acids. Catalyzes the reversible NADPH linked reduction of 3-dehydroshikimate (DHSA) to yield shikimate (SA). This chain is Shikimate dehydrogenase (NADP(+)), found in Gloeothece citriformis (strain PCC 7424) (Cyanothece sp. (strain PCC 7424)).